A 462-amino-acid polypeptide reads, in one-letter code: Trigger factor (462 aa).

The region spanning 163 to 248 is the PPIase FKBP-type domain; that stretch reads GDEVLFDFKG…LKEVRRVNSL (86 aa). The disordered stretch occupies residues 442-462; it reads SMQEKQTQEPAEEKVETKEEK. Residues 452-462 show a composition bias toward basic and acidic residues; sequence AEEKVETKEEK.

It belongs to the FKBP-type PPIase family. Tig subfamily.

It localises to the cytoplasm. The enzyme catalyses [protein]-peptidylproline (omega=180) = [protein]-peptidylproline (omega=0). In terms of biological role, involved in protein export. Acts as a chaperone by maintaining the newly synthesized protein in an open conformation. Functions as a peptidyl-prolyl cis-trans isomerase. The chain is Trigger factor from Mycoplasmopsis synoviae (strain 53) (Mycoplasma synoviae).